The chain runs to 502 residues: Protein Dok-7 (502 aa).

The region spanning 4 to 109 (SVVVEGYARL…WDARLRYSLG (106 aa)) is the PH domain. The region spanning 105–210 (RYSLGEVHRF…RGISPTRGPF (106 aa)) is the IRS-type PTB domain. Disordered stretches follow at residues 210-232 (FGLR…RLNH), 249-279 (STAS…SDCS), 291-358 (TSIQ…GSFS), and 418-482 (EVGG…GHPG). Composition is skewed to low complexity over residues 264 to 279 (ISGS…SDCS) and 301 to 316 (AGAK…PLPS). Positions 336 to 346 (GRQSSSDSGIA) are enriched in polar residues. Positions 347–358 (TGSHSSYSGSFS) are enriched in low complexity. A compositionally biased stretch (basic and acidic residues) spans 459 to 473 (PNEHFRSPSESKKSS).

It localises to the cell membrane. The protein localises to the synapse. Probable muscle-intrinsic activator of MUSK that plays an essential role in neuromuscular synaptogenesis. Acts in aneural activation of MUSK and subsequent acetylcholine receptor (AchR) clustering in myotubes. This is Protein Dok-7 (dok7) from Takifugu rubripes (Japanese pufferfish).